A 275-amino-acid chain; its full sequence is Dermonecrotic toxin LamSicTox-alphaIV1i (275 aa).

H5 is a catalytic residue. Mg(2+) contacts are provided by E25 and D27. The Nucleophile role is filled by H41. 2 disulfides stabilise this stretch: C45-C51 and C47-C192. A Mg(2+)-binding site is contributed by D85.

Belongs to the arthropod phospholipase D family. Class II subfamily. It depends on Mg(2+) as a cofactor. Expressed by the venom gland.

Its subcellular location is the secreted. It carries out the reaction an N-(acyl)-sphingosylphosphocholine = an N-(acyl)-sphingosyl-1,3-cyclic phosphate + choline. The enzyme catalyses an N-(acyl)-sphingosylphosphoethanolamine = an N-(acyl)-sphingosyl-1,3-cyclic phosphate + ethanolamine. It catalyses the reaction a 1-acyl-sn-glycero-3-phosphocholine = a 1-acyl-sn-glycero-2,3-cyclic phosphate + choline. The catalysed reaction is a 1-acyl-sn-glycero-3-phosphoethanolamine = a 1-acyl-sn-glycero-2,3-cyclic phosphate + ethanolamine. In terms of biological role, dermonecrotic toxins cleave the phosphodiester linkage between the phosphate and headgroup of certain phospholipids (sphingolipid and lysolipid substrates), forming an alcohol (often choline) and a cyclic phosphate. This toxin acts on sphingomyelin (SM). It may also act on ceramide phosphoethanolamine (CPE), lysophosphatidylcholine (LPC) and lysophosphatidylethanolamine (LPE), but not on lysophosphatidylserine (LPS), and lysophosphatidylglycerol (LPG). It acts by transphosphatidylation, releasing exclusively cyclic phosphate products as second products. Induces dermonecrosis, hemolysis, increased vascular permeability, edema, inflammatory response, and platelet aggregation. This chain is Dermonecrotic toxin LamSicTox-alphaIV1i, found in Loxosceles amazonica (Recluse spider).